The following is a 561-amino-acid chain: Dihydroxy-acid dehydratase (561 aa).

Cysteine 50 provides a ligand contact to [2Fe-2S] cluster. Aspartate 82 contacts Mg(2+). Cysteine 123 provides a ligand contact to [2Fe-2S] cluster. Residues aspartate 124 and lysine 125 each coordinate Mg(2+). Lysine 125 bears the N6-carboxylysine mark. A [2Fe-2S] cluster-binding site is contributed by cysteine 195. Mg(2+) is bound at residue glutamate 447. Serine 473 acts as the Proton acceptor in catalysis.

Belongs to the IlvD/Edd family. Homodimer. Requires [2Fe-2S] cluster as cofactor. The cofactor is Mg(2+).

The catalysed reaction is (2R)-2,3-dihydroxy-3-methylbutanoate = 3-methyl-2-oxobutanoate + H2O. It carries out the reaction (2R,3R)-2,3-dihydroxy-3-methylpentanoate = (S)-3-methyl-2-oxopentanoate + H2O. It participates in amino-acid biosynthesis; L-isoleucine biosynthesis; L-isoleucine from 2-oxobutanoate: step 3/4. It functions in the pathway amino-acid biosynthesis; L-valine biosynthesis; L-valine from pyruvate: step 3/4. In terms of biological role, functions in the biosynthesis of branched-chain amino acids. Catalyzes the dehydration of (2R,3R)-2,3-dihydroxy-3-methylpentanoate (2,3-dihydroxy-3-methylvalerate) into 2-oxo-3-methylpentanoate (2-oxo-3-methylvalerate) and of (2R)-2,3-dihydroxy-3-methylbutanoate (2,3-dihydroxyisovalerate) into 2-oxo-3-methylbutanoate (2-oxoisovalerate), the penultimate precursor to L-isoleucine and L-valine, respectively. In Microcystis aeruginosa (strain NIES-843 / IAM M-2473), this protein is Dihydroxy-acid dehydratase.